Consider the following 189-residue polypeptide: Photosystem I assembly protein Ycf4 (189 aa).

The next 2 membrane-spanning stretches (helical) occupy residues 31–51 (TVIL…YFGF) and 70–90 (VMSF…LTII).

Belongs to the Ycf4 family.

The protein localises to the plastid. It is found in the chloroplast thylakoid membrane. Its function is as follows. Seems to be required for the assembly of the photosystem I complex. The chain is Photosystem I assembly protein Ycf4 from Chlorokybus atmophyticus (Soil alga).